A 463-amino-acid polypeptide reads, in one-letter code: Type IV secretion system protein PtlD (463 aa).

Positions 1–24 are cleaved as a signal peptide; the sequence is MAGLSRILLSCTLACLLAGQAAQA. The next 5 helical transmembrane spans lie at 118-138, 232-252, 253-273, 294-314, and 333-353; these read LQPL…YALL, WLLC…LAAS, LLIV…LFLV, ALVF…VLAG, and MLAA…VPLA. A compositionally biased stretch (low complexity) spans 376-410; sequence AHRQAAARQYAPRPAAAAAAAGPHQAGTYAASATP. Residues 376–463 form a disordered region; that stretch reads AHRQAAARQY…RVLPRKPNLP (88 aa). Residues 411–420 show a composition bias toward pro residues; that stretch reads APAPARPAPS. Over residues 441-455 the composition is skewed to basic and acidic residues; that stretch reads VRRDDRPAPAPDRRV.

The protein localises to the cell membrane. Its function is as follows. Component of the type IV secretion system ptl required for secretion of assembled pertussis toxin (PTX) through the outer membrane. This Bordetella pertussis (strain Tohama I / ATCC BAA-589 / NCTC 13251) protein is Type IV secretion system protein PtlD (ptlD).